A 466-amino-acid polypeptide reads, in one-letter code: ATP synthase subunit beta (466 aa).

152–159 contributes to the ATP binding site; it reads GGAGVGKT.

Belongs to the ATPase alpha/beta chains family. F-type ATPases have 2 components, CF(1) - the catalytic core - and CF(0) - the membrane proton channel. CF(1) has five subunits: alpha(3), beta(3), gamma(1), delta(1), epsilon(1). CF(0) has three main subunits: a(1), b(2) and c(9-12). The alpha and beta chains form an alternating ring which encloses part of the gamma chain. CF(1) is attached to CF(0) by a central stalk formed by the gamma and epsilon chains, while a peripheral stalk is formed by the delta and b chains.

The protein resides in the cell inner membrane. It carries out the reaction ATP + H2O + 4 H(+)(in) = ADP + phosphate + 5 H(+)(out). Its function is as follows. Produces ATP from ADP in the presence of a proton gradient across the membrane. The catalytic sites are hosted primarily by the beta subunits. This chain is ATP synthase subunit beta, found in Helicobacter pylori (strain HPAG1).